Reading from the N-terminus, the 480-residue chain is MTLSFTARWRDELPATYTALLPTPLKNARLIWYNDELAQQLAIPASLFDATNGAGVWGGETLLPGMSPVAQVYSGHQFGIWAGQLGDGRGILLGEQLLADGSTLDWHLKGAGLTPYSRMGDGRAVLRSTIRESLASEAMHYLGIPTTRALSIVASDTPVQRETQETGAMLMRLAQSHMRFGHFEHFYYRREPEKVQQLADFAIRHYWPQWQDVAEKYALWFEEVAARTGRLIAEWQTVGFSHGVMNTDNMSILGLTIDYGPFGFLDDYDPGFIGNHSDHQGRYRFDNQPSVALWNLQRLAQTLTPFIEIDALNRALDRYQDALLTHYGQRMRQKLGFFTEQKDDNALLNELFSLMAREGSDYTRTFRMLSHTEQQSASSPLRDTFIDRAAFDAWFDRYRARLRTEAVDDALRQQQMQRVNPAIVLRNWLAQRAIDAAEQGDMAELHRLHEVLRQPFTDRDDDYASRPPEWGKRLEVSCSS.

8 residues coordinate ATP: G86, G88, R89, K109, D121, G122, R172, and R179. The active-site Proton acceptor is D248. Residues N249 and D258 each contribute to the Mg(2+) site. D258 is a binding site for ATP.

It belongs to the SELO family. Requires Mg(2+) as cofactor. Mn(2+) serves as cofactor.

The catalysed reaction is L-seryl-[protein] + ATP = 3-O-(5'-adenylyl)-L-seryl-[protein] + diphosphate. It carries out the reaction L-threonyl-[protein] + ATP = 3-O-(5'-adenylyl)-L-threonyl-[protein] + diphosphate. The enzyme catalyses L-tyrosyl-[protein] + ATP = O-(5'-adenylyl)-L-tyrosyl-[protein] + diphosphate. It catalyses the reaction L-histidyl-[protein] + UTP = N(tele)-(5'-uridylyl)-L-histidyl-[protein] + diphosphate. The catalysed reaction is L-seryl-[protein] + UTP = O-(5'-uridylyl)-L-seryl-[protein] + diphosphate. It carries out the reaction L-tyrosyl-[protein] + UTP = O-(5'-uridylyl)-L-tyrosyl-[protein] + diphosphate. In terms of biological role, nucleotidyltransferase involved in the post-translational modification of proteins. It can catalyze the addition of adenosine monophosphate (AMP) or uridine monophosphate (UMP) to a protein, resulting in modifications known as AMPylation and UMPylation. The chain is Protein nucleotidyltransferase YdiU from Salmonella typhi.